The primary structure comprises 133 residues: UPF0102 protein Fnod_1509 (133 aa).

Belongs to the UPF0102 family.

The protein is UPF0102 protein Fnod_1509 of Fervidobacterium nodosum (strain ATCC 35602 / DSM 5306 / Rt17-B1).